The following is a 710-amino-acid chain: Solute carrier organic anion transporter family member 3A1 (710 aa).

The residue at position 1 (M1) is an N-acetylmethionine. Residues 1–25 (MQAKKPGGSSGGGRSGELQGDEAQR) are disordered. At 1–40 (MQAKKPGGSSGGGRSGELQGDEAQRNKKKKKKVSCFSNIK) the chain is on the cytoplasmic side. Residues 41–60 (IFLVSECALMLAQGTVGAYL) traverse the membrane as a helical segment. Over 61-79 (VSVLTTLERRFNLQSADVG) the chain is Extracellular. The chain crosses the membrane as a helical span at residues 80-100 (VIASSFEIGNLALILFVSYFG). At 101–106 (ARGHRP) the chain is on the cytoplasmic side. The chain crosses the membrane as a helical span at residues 107–131 (RLIGCGGIVMALGALLSALPEFLTH). Topologically, residues 132 to 174 (QYKYEAGEIRWGAEGRDVCAANGSGGDQGPDPDLICRSRTATN) are extracellular. N153 carries N-linked (GlcNAc...) asparagine glycosylation. A helical transmembrane segment spans residues 175–203 (MMYLLLIGAQVLLGIGATPVQPLGVSYID). The Cytoplasmic portion of the chain corresponds to 204-222 (DHVRRKDSSLYIGILFTML). The helical transmembrane segment at 223-243 (VFGPACGFILGSFCTKIYVDA) threads the bilayer. Residues 244–261 (VFIDTSNLDITPDDPRWI) are Extracellular-facing. The helical transmembrane segment at 262–286 (GAWWGGFLLCGALLFFSSVLMFGFP) threads the bilayer. Topologically, residues 287 to 344 (QSLPPHSDPALESEQAMLPEREYERPKPSNGVLRHPLEPDSSASCFQQLRVIPKVTKH) are cytoplasmic. A helical membrane pass occupies residues 345 to 366 (LLSNPVFTCIILAACMEIAVVA). The Extracellular portion of the chain corresponds to 367 to 386 (GFAAFLGKYLEQQFNLTTSS). An N-linked (GlcNAc...) asparagine glycan is attached at N381. Residues 387-410 (ANQLLGMTAIPCACLGIFLGGLLV) form a helical membrane-spanning segment. At 411–414 (KKLS) the chain is on the cytoplasmic side. A helical transmembrane segment spans residues 415–438 (LSALGAIRMAMLVNLVSTACYVSF). Residues 439–539 (LFLGCDTGPV…PGCQEAFLTF (101 aa)) lie on the Extracellular side of the membrane. N-linked (GlcNAc...) asparagine glycosylation is present at N457. The 49-residue stretch at 465–513 (LDPYSSCNKNCECQTDSFTPVCGADGITYLSACFAGCNSTNLTGCACLM) folds into the Kazal-like domain. Disulfide bonds link C471–C501, C477–C497, and C486–C511. Residues N502, N505, and N519 are each glycosylated (N-linked (GlcNAc...) asparagine). Residues 540-562 (LCVMCVCSMIGAMAQTPSVIILI) form a helical membrane-spanning segment. The Cytoplasmic segment spans residues 563–571 (RTVSPELKS). The chain crosses the membrane as a helical span at residues 572–597 (YALGVLFLLLRLLGFIPPPLIFGAGI). Residues 598–630 (DSTCLFWSTFCGEQGACALYDNVAYRYLYVSIA) are Extracellular-facing. A helical membrane pass occupies residues 631 to 648 (IALKSFAFLLYTTTWQCL). The Cytoplasmic segment spans residues 649–705 (RKNYKRYIKNHEGGLSTSEFFASTLTLDNLGRDPVPANQTHRTKFIYNLEDHEWCEN).

This sequence belongs to the organo anion transporter (TC 2.A.60) family.

The protein localises to the basolateral cell membrane. Its subcellular location is the apical cell membrane. It localises to the basal cell membrane. The enzyme catalyses L-thyroxine(out) = L-thyroxine(in). It carries out the reaction prostaglandin E1(out) = prostaglandin E1(in). It catalyses the reaction prostaglandin E2(out) = prostaglandin E2(in). The catalysed reaction is prostaglandin F2alpha(out) = prostaglandin F2alpha(in). The enzyme catalyses (5Z,8Z,11Z,14Z)-eicosatetraenoate(out) = (5Z,8Z,11Z,14Z)-eicosatetraenoate(in). It carries out the reaction taurocholate(out) = taurocholate(in). It catalyses the reaction glycocholate(out) = glycocholate(in). The catalysed reaction is estrone 3-sulfate(out) = estrone 3-sulfate(in). The enzyme catalyses argipressin(out) = argipressin(in). Putative organic anion antiporter with apparent broad substrate specificity. Recognizes various substrates including thyroid hormone L-thyroxine, prostanoids such as prostaglandin E1 and E2, bile acids such as taurocholate, glycolate and glycochenodeoxycholate and peptide hormones such as L-arginine vasopressin, likely operating in a tissue-specific manner. The transport mechanism, its electrogenicity and potential tissue-specific counterions remain to be elucidated. The polypeptide is Solute carrier organic anion transporter family member 3A1 (SLCO3A1) (Bos taurus (Bovine)).